The chain runs to 545 residues: RAN GTPase-activating protein 2 (545 aa).

Residues 1–116 (MADILDSRPH…VAARELISED (116 aa)) form a WPP region. LRR repeat units follow at residues 213-236 (GSILSSLNLSDNALGEKGVRAFGA), 241-264 (LSSLEELYLMNDGISKEAAQAVSE), 269-296 (TENLRVLHFHNNMTGDEGALAIAEVVKR), 325-348 (CTHMEKLDLRDNMFGTEAGVSLSK), 353-380 (FKHMTELYLSYLNLEDEGAIAIVNALKE), 382-405 (ASPIEVLEMAGNDITVEAASAIAA), 410-433 (KQDLNKLNLSENELKDEGCVQIAN), 439-462 (HSKLQYIDMSTNYIRRAGARALAH), and 467-494 (KEAFKLLNIDGNIISEEGIEELKEIFKK). Positions 496–545 (PELLGALDENDPDGEEDDDDEEDEEDEENEGNGNGELESKLKNLEVNQED) are disordered. Positions 503–525 (DENDPDGEEDDDDEEDEEDEENE) are enriched in acidic residues.

Belongs to the RNA1 family. As to quaternary structure, homodimer. Interacts with WIP1 and WIP2 through its WPP domain. Component of Ran complexes at least composed of WIT1 or WIT2, RANGAP1 or RANGAP2, and WIP1 or WIP2 or WIP3. Interacts with WIT1.

Its subcellular location is the cytoplasm. The protein resides in the nucleus membrane. It is found in the cytoskeleton. It localises to the spindle. The protein localises to the phragmoplast. GTPase activator for the nuclear Ras-related regulatory protein Ran, converting it to the putatively inactive GDP-bound state. This chain is RAN GTPase-activating protein 2 (RANGAP2), found in Arabidopsis thaliana (Mouse-ear cress).